We begin with the raw amino-acid sequence, 331 residues long: Ketol-acid reductoisomerase (NADP(+)) (331 aa).

Residues 2–181 enclose the KARI N-terminal Rossmann domain; sequence LEKYYDKDAD…GATRAVVFET (180 aa). NADP(+) contacts are provided by residues 25 to 28, arginine 48, serine 52, and 82 to 85; these read YGSQ and DEQQ. Residue histidine 107 is part of the active site. Glycine 133 provides a ligand contact to NADP(+). Residues 182 to 327 enclose the KARI C-terminal knotted domain; it reads SFREETETDL…KEIRATMPQF (146 aa). Positions 190, 194, 226, and 230 each coordinate Mg(2+). Serine 251 provides a ligand contact to substrate.

Belongs to the ketol-acid reductoisomerase family. Mg(2+) serves as cofactor.

The catalysed reaction is (2R)-2,3-dihydroxy-3-methylbutanoate + NADP(+) = (2S)-2-acetolactate + NADPH + H(+). The enzyme catalyses (2R,3R)-2,3-dihydroxy-3-methylpentanoate + NADP(+) = (S)-2-ethyl-2-hydroxy-3-oxobutanoate + NADPH + H(+). It participates in amino-acid biosynthesis; L-isoleucine biosynthesis; L-isoleucine from 2-oxobutanoate: step 2/4. Its pathway is amino-acid biosynthesis; L-valine biosynthesis; L-valine from pyruvate: step 2/4. Its function is as follows. Involved in the biosynthesis of branched-chain amino acids (BCAA). Catalyzes an alkyl-migration followed by a ketol-acid reduction of (S)-2-acetolactate (S2AL) to yield (R)-2,3-dihydroxy-isovalerate. In the isomerase reaction, S2AL is rearranged via a Mg-dependent methyl migration to produce 3-hydroxy-3-methyl-2-ketobutyrate (HMKB). In the reductase reaction, this 2-ketoacid undergoes a metal-dependent reduction by NADPH to yield (R)-2,3-dihydroxy-isovalerate. The protein is Ketol-acid reductoisomerase (NADP(+)) of Methanospirillum hungatei JF-1 (strain ATCC 27890 / DSM 864 / NBRC 100397 / JF-1).